Consider the following 504-residue polypeptide: Pyruvate kinase (504 aa).

Arg53 is a binding site for substrate. K(+) is bound by residues Asn55, Ser57, Asp88, and Thr89. 55-58 provides a ligand contact to ATP; the sequence is NFSH. ATP-binding residues include Arg95 and Lys181. Residue Glu246 coordinates Mg(2+). Positions 269, 270, and 302 each coordinate substrate. Residue Asp270 coordinates Mg(2+).

The protein belongs to the pyruvate kinase family. Homotetramer. Requires Mg(2+) as cofactor. It depends on K(+) as a cofactor.

Its subcellular location is the cytoplasm. It catalyses the reaction pyruvate + ATP = phosphoenolpyruvate + ADP + H(+). The protein operates within carbohydrate degradation; glycolysis; pyruvate from D-glyceraldehyde 3-phosphate: step 5/5. The sequence is that of Pyruvate kinase (CDC19) from Candida albicans (strain SC5314 / ATCC MYA-2876) (Yeast).